The primary structure comprises 384 residues: N-acetylneuraminate epimerase (384 aa).

An N-terminal signal peptide occupies residues 1–24; that stretch reads MMKTKYLLLPLLASSSLLSHMAFA. Kelch repeat units lie at residues 46-90, 92-145, 147-184, 185-230, 233-281, 303-352, and 354-383; these read KVYV…TVVG, NIFV…YSPD, KQVL…KIVD, DYMG…VIDG, ITLI…IAGA, AQFE…SVKG, and VLMV…IDIV. Glu-239 acts as the Proton acceptor in catalysis.

It belongs to the NanM family. In terms of assembly, homodimer.

It localises to the periplasm. It catalyses the reaction N-acetyl-alpha-neuraminate = N-acetyl-beta-neuraminate. Converts alpha-N-acetylneuranimic acid (Neu5Ac) to the beta-anomer, accelerating the equilibrium between the alpha- and beta-anomers. Probably facilitates sialidase-negative bacteria to compete successfully for limited amounts of extracellular Neu5Ac, which is likely taken up in the beta-anomer. In addition, the rapid removal of sialic acid from solution might be advantageous to the bacterium to damp down host responses. This is N-acetylneuraminate epimerase from Vibrio vulnificus (strain YJ016).